Reading from the N-terminus, the 269-residue chain is Myelin protein zero-like protein 1 (269 aa).

Positions 1–35 (MAASAGAGAVIAAPDSRRWLWSVLAAALGLLTAGV) are cleaved as a signal peptide. Residues 36–146 (SALEVYTPKE…VKNPPDIVVQ (111 aa)) enclose the Ig-like V-type domain. Residues 36–162 (SALEVYTPKE…YVVEKENLPV (127 aa)) are Extracellular-facing. N-linked (GlcNAc...) asparagine glycans are attached at residues N50 and N130. C58 and C135 are joined by a disulfide. The chain crosses the membrane as a helical span at residues 163 to 183 (FPVWVVVGIVTAVVLGLTLLI). At 184-269 (SMILAVLYRR…SVVYADIRKN (86 aa)) the chain is on the cytoplasmic side. The interval 199–238 (DYTGCSTSESLSPVKQAPRKSPSDTEGLVKSLPSGSHQGP) is disordered. Over residues 202 to 211 (GCSTSESLSP) the composition is skewed to polar residues. Phosphoserine is present on residues S204, S206, S208, S210, S219, and S221. Positions 239 to 244 (VIYAQL) match the ITIM motif 1 motif. A Phosphotyrosine modification is found at Y241. Residue S260 is modified to Phosphoserine. Residues 261–266 (VVYADI) carry the ITIM motif 2 motif. The residue at position 263 (Y263) is a Phosphotyrosine.

It belongs to the myelin P0 protein family. As to quaternary structure, interacts with phosphorylated PTPN11/SHP-2. Phosphorylated on tyrosine residues upon stimulation with pervanadate and concanavalin-A (ConA). Phosphorylation at Tyr-241 and Tyr-263 is required for interaction with PTPN11/SHP-2. Dephosphorylated by PTPN11/SHP-2 (in vitro). Post-translationally, N-glycosylated. N-glycosylation is required for concanavalin A binding. As to expression, widely expressed with highest levels in heart, placenta, kidney and pancreas. Isoform 3 is relatively abundant in hematopoietic tissues and fetal liver. Isoform 1 and isoform 3 are expressed in CD14- PB monocytes and pre-B cell progenitors. Isoform 3 appears to be the major isoform in CD34- promyelocytic and promonocytic cells. During differentiation in monocytic cells, the expression level of isoform 3 decreases and that of isoform 1 increases. Isoform 1 is prominent in stromal cells and, to a lesser extent, in umbilical vein endothelial cells and erythroid progenitors. Isoform 2 is expressed in a erythroid progenitor cell line.

The protein localises to the membrane. Functionally, cell surface receptor, which is involved in signal transduction processes. Recruits PTPN11/SHP-2 to the cell membrane and is a putative substrate of PTPN11/SHP-2. Is a major receptor for concanavalin-A (ConA) and is involved in cellular signaling induced by ConA, which probably includes Src family tyrosine-protein kinases. Isoform 3 seems to have a dominant negative role; it blocks tyrosine phosphorylation of MPZL1 induced by ConA. Isoform 1, but not isoform 2 and isoform 3, may be involved in regulation of integrin-mediated cell motility. In Homo sapiens (Human), this protein is Myelin protein zero-like protein 1 (MPZL1).